Consider the following 487-residue polypeptide: Aspartyl/glutamyl-tRNA(Asn/Gln) amidotransferase subunit B (487 aa).

The protein belongs to the GatB/GatE family. GatB subfamily. In terms of assembly, heterotrimer of A, B and C subunits.

It carries out the reaction L-glutamyl-tRNA(Gln) + L-glutamine + ATP + H2O = L-glutaminyl-tRNA(Gln) + L-glutamate + ADP + phosphate + H(+). The enzyme catalyses L-aspartyl-tRNA(Asn) + L-glutamine + ATP + H2O = L-asparaginyl-tRNA(Asn) + L-glutamate + ADP + phosphate + 2 H(+). In terms of biological role, allows the formation of correctly charged Asn-tRNA(Asn) or Gln-tRNA(Gln) through the transamidation of misacylated Asp-tRNA(Asn) or Glu-tRNA(Gln) in organisms which lack either or both of asparaginyl-tRNA or glutaminyl-tRNA synthetases. The reaction takes place in the presence of glutamine and ATP through an activated phospho-Asp-tRNA(Asn) or phospho-Glu-tRNA(Gln). The polypeptide is Aspartyl/glutamyl-tRNA(Asn/Gln) amidotransferase subunit B (Chlamydia caviae (strain ATCC VR-813 / DSM 19441 / 03DC25 / GPIC) (Chlamydophila caviae)).